We begin with the raw amino-acid sequence, 439 residues long: FBD-associated F-box protein At5g56380 (439 aa).

Residues 1–61 enclose the F-box domain; the sequence is MDRISHLADE…LPETWGYQEP (61 aa). The region spanning 358–406 is the FBD domain; sequence WNQPGSVPRCLSSSLETLEWVEYGGTHEEKELSTYLFKTAVCFKKASFT.

The polypeptide is FBD-associated F-box protein At5g56380 (Arabidopsis thaliana (Mouse-ear cress)).